The sequence spans 265 residues: Hydroxyethylthiazole kinase (265 aa).

Position 50 (Met-50) interacts with substrate. Residues Arg-125 and Thr-171 each coordinate ATP. Gly-198 lines the substrate pocket.

This sequence belongs to the Thz kinase family. Mg(2+) is required as a cofactor.

The enzyme catalyses 5-(2-hydroxyethyl)-4-methylthiazole + ATP = 4-methyl-5-(2-phosphooxyethyl)-thiazole + ADP + H(+). The protein operates within cofactor biosynthesis; thiamine diphosphate biosynthesis; 4-methyl-5-(2-phosphoethyl)-thiazole from 5-(2-hydroxyethyl)-4-methylthiazole: step 1/1. In terms of biological role, catalyzes the phosphorylation of the hydroxyl group of 4-methyl-5-beta-hydroxyethylthiazole (THZ). The chain is Hydroxyethylthiazole kinase from Salmonella typhimurium (strain LT2 / SGSC1412 / ATCC 700720).